A 328-amino-acid polypeptide reads, in one-letter code: Pantothenate kinase (328 aa).

Over residues 1 to 12 (MAAPLNAQTRAP) the composition is skewed to polar residues. Residues 1–22 (MAAPLNAQTRAPQATGRAPDFS) form a disordered region. 113 to 120 (GSVAVGKS) lines the ATP pocket.

This sequence belongs to the prokaryotic pantothenate kinase family.

It is found in the cytoplasm. The enzyme catalyses (R)-pantothenate + ATP = (R)-4'-phosphopantothenate + ADP + H(+). It functions in the pathway cofactor biosynthesis; coenzyme A biosynthesis; CoA from (R)-pantothenate: step 1/5. In Corynebacterium efficiens (strain DSM 44549 / YS-314 / AJ 12310 / JCM 11189 / NBRC 100395), this protein is Pantothenate kinase.